The primary structure comprises 718 residues: Cyclomaltodextrin glucanotransferase (718 aa).

A signal peptide spans 1–34; it reads MFQMAKRAFLSTTLTLGLLAGSALPFLPASAAYA. Positions 35–172 are A1; the sequence is DPDIAVTNKQ…GIKIIIDFAP (138 aa). Positions 61, 63, 66, and 67 each coordinate Ca(2+). An intrachain disulfide couples C77 to C84. Residues G85 and D87 each contribute to the Ca(2+) site. 134-135 is a binding site for substrate; sequence YW. Residue N173 coordinates Ca(2+). The b stretch occupies residues 173-236; sequence NHTSPAMETD…NLYDLADFNH (64 aa). H174 contributes to the substrate binding site. I224 contacts Ca(2+). 227–230 provides a ligand contact to substrate; it reads NLYD. D233 contributes to the Ca(2+) binding site. The tract at residues 237–440 is A2; the sequence is NNATIDKYFK…LRKSNPAIAY (204 aa). Substrate is bound at residue R261. Catalysis depends on D263, which acts as the Nucleophile. Position 266–267 (266–267) interacts with substrate; sequence KH. H267 lines the Ca(2+) pocket. E291 functions as the Proton donor in the catalytic mechanism. H361, D405, and R409 together coordinate substrate. Positions 441 to 528 are c; the sequence is GSTQQRWINN…ATAVWQYTAA (88 aa). Positions 529-614 are d; the sequence is ETTPTIGHVG…SNAYNHFTIL (86 aa). The 81-residue stretch at 532–612 folds into the IPT/TIG domain; that stretch reads PTIGHVGPVM…VNSNAYNHFT (81 aa). The CBM20 domain occupies 613–718; it reads ILTGDQVTVR…GTATVTVNWQ (106 aa). The interval 615-718 is e; sequence TGDQVTVRFV…GTATVTVNWQ (104 aa).

The protein belongs to the glycosyl hydrolase 13 family. As to quaternary structure, monomer. Ca(2+) is required as a cofactor.

It is found in the secreted. The catalysed reaction is Cyclizes part of a (1-&gt;4)-alpha-D-glucan chain by formation of a (1-&gt;4)-alpha-D-glucosidic bond.. In Bacillus sp. (strain 6.6.3), this protein is Cyclomaltodextrin glucanotransferase (cgt).